A 204-amino-acid polypeptide reads, in one-letter code: Holliday junction branch migration complex subunit RuvA (204 aa).

Positions 1–67 are domain I; sequence MIAFLSGHLV…ETELVLYGFG (67 aa). Residues 68-146 form a domain II region; that stretch reads SPAERDLFVE…HWRQGMGVAD (79 aa). Residues 147–157 form a flexible linker region; that stretch reads QPLAGGPPMPI. The domain III stretch occupies residues 157-204; that stretch reads IREEVEMALLALGYSTQEIQAALQALPTHPRPTEDWLRDAITYLSQQP.

Belongs to the RuvA family. Homotetramer. Forms an RuvA(8)-RuvB(12)-Holliday junction (HJ) complex. HJ DNA is sandwiched between 2 RuvA tetramers; dsDNA enters through RuvA and exits via RuvB. An RuvB hexamer assembles on each DNA strand where it exits the tetramer. Each RuvB hexamer is contacted by two RuvA subunits (via domain III) on 2 adjacent RuvB subunits; this complex drives branch migration. In the full resolvosome a probable DNA-RuvA(4)-RuvB(12)-RuvC(2) complex forms which resolves the HJ.

The protein resides in the cytoplasm. In terms of biological role, the RuvA-RuvB-RuvC complex processes Holliday junction (HJ) DNA during genetic recombination and DNA repair, while the RuvA-RuvB complex plays an important role in the rescue of blocked DNA replication forks via replication fork reversal (RFR). RuvA specifically binds to HJ cruciform DNA, conferring on it an open structure. The RuvB hexamer acts as an ATP-dependent pump, pulling dsDNA into and through the RuvAB complex. HJ branch migration allows RuvC to scan DNA until it finds its consensus sequence, where it cleaves and resolves the cruciform DNA. The sequence is that of Holliday junction branch migration complex subunit RuvA from Synechococcus sp. (strain JA-2-3B'a(2-13)) (Cyanobacteria bacterium Yellowstone B-Prime).